The chain runs to 243 residues: Triosephosphate isomerase (243 aa).

9-11 (NWK) lines the substrate pocket. His-98 serves as the catalytic Electrophile. Glu-167 serves as the catalytic Proton acceptor. Substrate is bound by residues Gly-173, Ser-205, and 226-227 (GG).

The protein belongs to the triosephosphate isomerase family. As to quaternary structure, homodimer.

It is found in the cytoplasm. The catalysed reaction is D-glyceraldehyde 3-phosphate = dihydroxyacetone phosphate. Its pathway is carbohydrate biosynthesis; gluconeogenesis. It participates in carbohydrate degradation; glycolysis; D-glyceraldehyde 3-phosphate from glycerone phosphate: step 1/1. Its function is as follows. Involved in the gluconeogenesis. Catalyzes stereospecifically the conversion of dihydroxyacetone phosphate (DHAP) to D-glyceraldehyde-3-phosphate (G3P). This is Triosephosphate isomerase from Mesomycoplasma hyorhinis (Mycoplasma hyorhinis).